A 100-amino-acid polypeptide reads, in one-letter code: Small ribosomal subunit protein uS14 (100 aa).

It belongs to the universal ribosomal protein uS14 family. In terms of assembly, part of the 30S ribosomal subunit. Contacts proteins S3 and S10.

In terms of biological role, binds 16S rRNA, required for the assembly of 30S particles and may also be responsible for determining the conformation of the 16S rRNA at the A site. In Prochlorococcus marinus (strain MIT 9313), this protein is Small ribosomal subunit protein uS14.